The primary structure comprises 253 residues: Oxidoreductase AOL_s00215g277 (253 aa).

The chain crosses the membrane as a helical span at residues 181-203; it reads FFGYWLTVILGYYIGSLLGYQPF.

Belongs to the oxidoreductase OpS7 family.

Its subcellular location is the membrane. It participates in secondary metabolite biosynthesis; terpenoid biosynthesis. Oxidoreductase; part of the gene cluster that mediates the biosynthesis of sesquiterpenyl epoxy-cyclohexenoids (SECs) such as anthrobotrisins and arthrosporols, metabolites that possess a novel hybrid carbon skeleton consisting of a polyketide-derived epoxycyclohexenol combined with a terpenoid-derived monocyclic sesquiterpenol substructure (PKS-PTS hybrid). The SEC pathway plays an important role for fungal soil colonization via decreasing fungal nematode-capturing ability. Within the pathway, the oxidoreductase AOL_s00215g277 seems to play a role in the farnesylation step of toluquinol to produce farnesyl hydroquinone, the hybrid precursor for biosynthesis of SECs. The pathway begins with the biosynthesis of 6-methylsalicylic acid (6-MSA), the first precursor of the polyketide-derived epoxycyclohexenol in arthrosporols, by the polyketide synthase (PKS) AOL_s00215g283 via condensation of 1 acetate and 3 malonate units. The 6-methylsalicylic acid decarboxylase AOL_s00215g281 then catalyzes the decarboxylation of 6-methylsalicylic acid to yield m-cresol. The cytochrome P450 monooxygenase AOL_s00215g282 further oxidizes m-cresol to yield toluquinol. With the assistance of the oxidoreductase AOL_s00215g277, the polyprenyl transferase AOL_s00215g276 catalyzes the farnesylation of toluquinol to produce farnesyl hydroquinone, the hybrid precursor for biosynthesis of SECs. Farnesyl hydroquinone undergoes epoxidation and then subsequent dehydrogenation to form farnesyl epoxy-quinone, the first and simplest SEC. The cytochrome P450 monooxygenase AOL_s00215g278 and the FAD-dependent monooxygenase AOL_s00215g279 might be involved in the oxygenation of the phenol moiety, most likely in the epoxy formation. The cytochrome P450 monooxygenases AOL_s00215g274 and AOL_s00215g280 are involved in specific regional ketone reductions at respectively C-4 and C-1 of farnesyl epoxy-quinone PubMed:33823587. This is Oxidoreductase AOL_s00215g277 from Arthrobotrys oligospora (strain ATCC 24927 / CBS 115.81 / DSM 1491) (Nematode-trapping fungus).